Here is a 177-residue protein sequence, read N- to C-terminus: Probable inosine/xanthosine triphosphatase (177 aa).

This sequence belongs to the YjjX NTPase family. As to quaternary structure, homodimer. Mg(2+) serves as cofactor. Requires Mn(2+) as cofactor.

The catalysed reaction is XTP + H2O = XDP + phosphate + H(+). It catalyses the reaction ITP + H2O = IDP + phosphate + H(+). Phosphatase that hydrolyzes non-canonical purine nucleotides such as XTP and ITP to their respective diphosphate derivatives. Probably excludes non-canonical purines from DNA/RNA precursor pool, thus preventing their incorporation into DNA/RNA and avoiding chromosomal lesions. In Pyrobaculum arsenaticum (strain DSM 13514 / JCM 11321 / PZ6), this protein is Probable inosine/xanthosine triphosphatase.